The sequence spans 333 residues: Low specificity L-threonine aldolase (333 aa).

Lys-197 bears the N6-(pyridoxal phosphate)lysine mark.

Belongs to the threonine aldolase family. As to quaternary structure, homotetramer. Requires pyridoxal 5'-phosphate as cofactor.

The enzyme catalyses L-threonine = acetaldehyde + glycine. The catalysed reaction is L-allo-threonine = acetaldehyde + glycine. Catalyzes the cleavage of L-allo-threonine and L-threonine to glycine and acetaldehyde. L-threo-phenylserine and L-erythro-phenylserine are also good substrates. The sequence is that of Low specificity L-threonine aldolase (ltaE) from Escherichia coli (strain K12).